A 574-amino-acid polypeptide reads, in one-letter code: Probable E3 ubiquitin-protein ligase ipaH4.5 (574 aa).

An interaction with target proteins region spans residues 1–284; the sequence is MKPINNHSFF…YHGPQIYFSM (284 aa). LRR repeat units lie at residues 63 to 82, 83 to 104, 105 to 122, 123 to 143, 144 to 165, 166 to 183, 184 to 205, 206 to 223, 224 to 246, and 247 to 270; these read REPV…PLPL, HIRE…SPLL, TELH…TLPS, QLIK…SLPP, YLQS…PSTL, TILR…ELPH, RLQE…PQSL, KYLK…RLPQ, ELLA…ITLP, and ICTN…QRLT. A linker region spans residues 285–292; that stretch reads SDGQQNTL. Positions 293–574 are E3 ubiquitin-protein ligase catalytic domain; sequence HRPLADAVTA…YRQLTDEVLA (282 aa). In terms of domain architecture, NEL spans 295–574; that stretch reads PLADAVTAWF…YRQLTDEVLA (280 aa). C379 acts as the Glycyl thioester intermediate in catalysis.

This sequence belongs to the LRR-containing bacterial E3 ligase family. Post-translationally, ubiquitinated in the presence of host E1 ubiquitin-activating enzyme, E2 ubiquitin-conjugating enzyme and ubiquitin.

The protein localises to the secreted. The protein resides in the host cytoplasm. The enzyme catalyses S-ubiquitinyl-[E2 ubiquitin-conjugating enzyme]-L-cysteine + [acceptor protein]-L-lysine = [E2 ubiquitin-conjugating enzyme]-L-cysteine + N(6)-ubiquitinyl-[acceptor protein]-L-lysine.. Functionally, effector proteins function to alter host cell physiology and promote bacterial survival in host tissues. This protein is an E3 ubiquitin ligase that interferes with host's ubiquitination pathway. In Shigella flexneri, this protein is Probable E3 ubiquitin-protein ligase ipaH4.5 (ipaH4.5).